Reading from the N-terminus, the 626-residue chain is Phosphoenolpyruvate carboxykinase (ATP) 2 (626 aa).

2 disordered regions span residues 1 to 23 (MASP…APVN) and 64 to 86 (PNLV…KHQQ). Residue 324–331 (GLSGTGKT) coordinates ATP.

Belongs to the phosphoenolpyruvate carboxykinase (ATP) family. In terms of assembly, homohexamer.

The protein resides in the cytoplasm. The catalysed reaction is oxaloacetate + ATP = phosphoenolpyruvate + ADP + CO2. The protein operates within carbohydrate biosynthesis; gluconeogenesis. The polypeptide is Phosphoenolpyruvate carboxykinase (ATP) 2 (PCK2) (Urochloa panicoides (Panic liverseed grass)).